Here is a 341-residue protein sequence, read N- to C-terminus: Phosphoribosylformylglycinamidine cyclo-ligase (341 aa).

This sequence belongs to the AIR synthase family.

It localises to the cytoplasm. It catalyses the reaction 2-formamido-N(1)-(5-O-phospho-beta-D-ribosyl)acetamidine + ATP = 5-amino-1-(5-phospho-beta-D-ribosyl)imidazole + ADP + phosphate + H(+). The protein operates within purine metabolism; IMP biosynthesis via de novo pathway; 5-amino-1-(5-phospho-D-ribosyl)imidazole from N(2)-formyl-N(1)-(5-phospho-D-ribosyl)glycinamide: step 2/2. The sequence is that of Phosphoribosylformylglycinamidine cyclo-ligase from Caldicellulosiruptor bescii (strain ATCC BAA-1888 / DSM 6725 / KCTC 15123 / Z-1320) (Anaerocellum thermophilum).